The following is a 102-amino-acid chain: Small ribosomal subunit protein uS10 (102 aa).

This sequence belongs to the universal ribosomal protein uS10 family. As to quaternary structure, part of the 30S ribosomal subunit.

Functionally, involved in the binding of tRNA to the ribosomes. In Bacillus cereus (strain ATCC 10987 / NRS 248), this protein is Small ribosomal subunit protein uS10.